Here is a 302-residue protein sequence, read N- to C-terminus: Large ribosomal subunit protein uL4m (302 aa).

It belongs to the universal ribosomal protein uL4 family. In terms of assembly, component of the mitochondrial ribosome large subunit (39S) which comprises a 16S rRNA and about 50 distinct proteins.

It localises to the mitochondrion. This Danio rerio (Zebrafish) protein is Large ribosomal subunit protein uL4m (mrpl4).